Consider the following 258-residue polypeptide: Large ribosomal subunit protein eL8z (258 aa).

The interval 1–20 (MAPKRGGRAPVPAKKKTEKV) is disordered.

It belongs to the eukaryotic ribosomal protein eL8 family.

This chain is Large ribosomal subunit protein eL8z (RPL7A-1), found in Oryza sativa subsp. japonica (Rice).